A 419-amino-acid polypeptide reads, in one-letter code: 3-isopropylmalate dehydratase large subunit (419 aa).

Residues cysteine 300, cysteine 360, and cysteine 363 each contribute to the [4Fe-4S] cluster site.

This sequence belongs to the aconitase/IPM isomerase family. LeuC type 2 subfamily. Heterodimer of LeuC and LeuD. The cofactor is [4Fe-4S] cluster.

It carries out the reaction (2R,3S)-3-isopropylmalate = (2S)-2-isopropylmalate. It participates in amino-acid biosynthesis; L-leucine biosynthesis; L-leucine from 3-methyl-2-oxobutanoate: step 2/4. In terms of biological role, catalyzes the isomerization between 2-isopropylmalate and 3-isopropylmalate, via the formation of 2-isopropylmaleate. The protein is 3-isopropylmalate dehydratase large subunit of Desulfatibacillum aliphaticivorans.